Here is a 370-residue protein sequence, read N- to C-terminus: Queuine tRNA-ribosyltransferase (370 aa).

Asp89 (proton acceptor) is an active-site residue. Residues 89–93, Asp143, Gln185, and Gly212 contribute to the substrate site; that span reads DSGGF. The segment at 243–249 is RNA binding; that stretch reads GVGTPED. Asp262 (nucleophile) is an active-site residue. The RNA binding; important for wobble base 34 recognition stretch occupies residues 267-271; sequence TRNAR. The Zn(2+) site is built by Cys300, Cys302, Cys305, and His331.

Belongs to the queuine tRNA-ribosyltransferase family. In terms of assembly, homodimer. Within each dimer, one monomer is responsible for RNA recognition and catalysis, while the other monomer binds to the replacement base PreQ1. The cofactor is Zn(2+).

The enzyme catalyses 7-aminomethyl-7-carbaguanine + guanosine(34) in tRNA = 7-aminomethyl-7-carbaguanosine(34) in tRNA + guanine. It functions in the pathway tRNA modification; tRNA-queuosine biosynthesis. Its function is as follows. Catalyzes the base-exchange of a guanine (G) residue with the queuine precursor 7-aminomethyl-7-deazaguanine (PreQ1) at position 34 (anticodon wobble position) in tRNAs with GU(N) anticodons (tRNA-Asp, -Asn, -His and -Tyr). Catalysis occurs through a double-displacement mechanism. The nucleophile active site attacks the C1' of nucleotide 34 to detach the guanine base from the RNA, forming a covalent enzyme-RNA intermediate. The proton acceptor active site deprotonates the incoming PreQ1, allowing a nucleophilic attack on the C1' of the ribose to form the product. After dissociation, two additional enzymatic reactions on the tRNA convert PreQ1 to queuine (Q), resulting in the hypermodified nucleoside queuosine (7-(((4,5-cis-dihydroxy-2-cyclopenten-1-yl)amino)methyl)-7-deazaguanosine). This is Queuine tRNA-ribosyltransferase from Methylobacillus flagellatus (strain ATCC 51484 / DSM 6875 / VKM B-1610 / KT).